We begin with the raw amino-acid sequence, 504 residues long: Anaerobic nitric oxide reductase transcription regulator NorR (504 aa).

Asp57 is modified (4-aspartylphosphate). The 230-residue stretch at 187–416 (MIGLSPGMTQ…LEHAIHRAVV (230 aa)) folds into the Sigma-54 factor interaction domain. ATP-binding positions include 215–222 (GETGTGKE) and 278–287 (ADNGTLFLDE). Residues 479-498 (WAASARMLETDVANLHRLAK) constitute a DNA-binding region (H-T-H motif).

It functions in the pathway nitrogen metabolism; nitric oxide reduction. In terms of biological role, required for the expression of anaerobic nitric oxide (NO) reductase, acts as a transcriptional activator for at least the norVW operon. Activation also requires sigma-54. The protein is Anaerobic nitric oxide reductase transcription regulator NorR of Escherichia fergusonii (strain ATCC 35469 / DSM 13698 / CCUG 18766 / IAM 14443 / JCM 21226 / LMG 7866 / NBRC 102419 / NCTC 12128 / CDC 0568-73).